Reading from the N-terminus, the 439-residue chain is Trigger factor (439 aa).

The PPIase FKBP-type domain occupies 163–248 (GDIAVIDFEG…LNQIKERVLP (86 aa)).

Belongs to the FKBP-type PPIase family. Tig subfamily.

It localises to the cytoplasm. It catalyses the reaction [protein]-peptidylproline (omega=180) = [protein]-peptidylproline (omega=0). Functionally, involved in protein export. Acts as a chaperone by maintaining the newly synthesized protein in an open conformation. Functions as a peptidyl-prolyl cis-trans isomerase. In Syntrophotalea carbinolica (strain DSM 2380 / NBRC 103641 / GraBd1) (Pelobacter carbinolicus), this protein is Trigger factor.